A 773-amino-acid chain; its full sequence is MEITTKSSTTTDDLNNNNNKTVTPIKSENSATGHTSPPNNSTTTTTSSTSAQPITVLPTEIIKTFEHLLRKSQRLFIGLRDLPQFGRQWQPFFQKTFELYTKLWKFQQQYRSILEDKSKYGLKRCEIGEIASKIGQLYYHYYLRTSDTNYLNESYIFYEAIRLRSYFKDVSLDKTPDMMVKQLRYYARFIVVCLLLNKKKVVFDLIEELLKHVNDYTKIYKPSDAQEWSLVLQEIFSFLQADQCATFSDTNQSPSLTNSGNIINNNSNSNNNNGEHTNNTVQSHRLNHLNCPSPPFPLESTQILQQAILVGSQQNQIKFSEITLDMFRMTQSLEYEPMSEAKENDMKLKQQLTALQQQQQQQAAEAKEKNNGTDQQNTTIPSQPLQQHLHHQQQQQQNGNGSGIKKRNPHKYLLYRPTISQILLFLSYSFKELGDNKAMLLYICADGFTNEDNHVNQHIQPPPSIQQETVPSLIDDSNTNIPITTTATATNPLYNKLFTKGLTLNMQKPSQAINSPTVNNNNNNTTTNVTVPTTTTTATNVTAQTTTTTTTTNSTSTSTTSNIPIYKYNEAPFNTKVESLYPMDLLPFCRKPFFLIVNSQSSDIFNELPTFNQPFVSLLSPQSIPKKLVSNLKCGNLFTFFLHDPISAFCDISCGNKIPSKTFNNISLLAQNSLEIISKLLFECVDLHPSFSFFLLDDFLRSFIIRFIFCHATFYLHKEFQDNIYQVKSNPPLPKSLLYNQSILKSIHQLVSELDVSDQFLGLNENRLVIHEN.

The segment covering 1-23 has biased composition (low complexity); that stretch reads MEITTKSSTTTDDLNNNNNKTVT. 4 disordered regions span residues 1 to 51, 250 to 280, 353 to 408, and 513 to 532; these read MEIT…STSA, TNQSPSLTNSGNIINNNSNSNNNNGEHTNNT, TALQ…KKRN, and INSPTVNNNNNNTTTNVTVP. The span at 24–34 shows a compositional bias: polar residues; that stretch reads PIKSENSATGH. Composition is skewed to low complexity over residues 35 to 50, 258 to 274, and 353 to 364; these read TSPPNNSTTTTTSSTS, NSGNIINNNSNSNNNNG, and TALQQQQQQQAA. Residues 372–382 are compositionally biased toward polar residues; it reads GTDQQNTTIPS. 2 stretches are compositionally biased toward low complexity: residues 383-397 and 514-532; these read QPLQQHLHHQQQQQQ and NSPTVNNNNNNTTTNVTVP.

Belongs to the SCAI family.

The protein localises to the nucleus. The protein resides in the cytoplasm. Functionally, may function as a transcriptional cofactor with a repressor activity. The chain is Protein SCAI homolog (scai) from Dictyostelium discoideum (Social amoeba).